The sequence spans 525 residues: Putative ribose/galactose/methyl galactoside import ATP-binding protein (525 aa).

Over residues 1-15 (MFGSATANPPAQRNL) the composition is skewed to polar residues. The disordered stretch occupies residues 1–23 (MFGSATANPPAQRNLPSGDGDGG). ABC transporter domains follow at residues 33-269 (LEIS…VGRE) and 279-523 (KPAG…SGHK). Residue 65-72 (GENGAGKS) coordinates ATP.

This sequence belongs to the ABC transporter superfamily. Carbohydrate importer 2 (CUT2) (TC 3.A.1.2) family.

It localises to the cell inner membrane. The catalysed reaction is D-ribose(out) + ATP + H2O = D-ribose(in) + ADP + phosphate + H(+). It catalyses the reaction D-galactose(out) + ATP + H2O = D-galactose(in) + ADP + phosphate + H(+). Part of an ABC transporter complex involved in carbohydrate import. Could be involved in ribose, galactose and/or methyl galactoside import. Responsible for energy coupling to the transport system. This Pseudomonas syringae pv. syringae (strain B728a) protein is Putative ribose/galactose/methyl galactoside import ATP-binding protein.